Here is a 277-residue protein sequence, read N- to C-terminus: Phosphate import ATP-binding protein PstB 1 (277 aa).

The 246-residue stretch at 27–272 (LRVRDLAVSY…PSHELTAAYI (246 aa)) folds into the ABC transporter domain. 59-66 (GPSGCGKT) lines the ATP pocket.

This sequence belongs to the ABC transporter superfamily. Phosphate importer (TC 3.A.1.7) family. The complex is composed of two ATP-binding proteins (PstB), two transmembrane proteins (PstC and PstA) and a solute-binding protein (PstS).

It is found in the cell inner membrane. The catalysed reaction is phosphate(out) + ATP + H2O = ADP + 2 phosphate(in) + H(+). Its function is as follows. Part of the ABC transporter complex PstSACB involved in phosphate import. Responsible for energy coupling to the transport system. The protein is Phosphate import ATP-binding protein PstB 1 of Nitrosococcus oceani (strain ATCC 19707 / BCRC 17464 / JCM 30415 / NCIMB 11848 / C-107).